The sequence spans 1059 residues: Carbamoyl phosphate synthase large chain (1059 aa).

Residues 1-401 are carboxyphosphate synthetic domain; sequence MPKRTDIHKI…ALLKAVASLE (401 aa). ATP contacts are provided by Arg-129, Arg-169, Gly-175, Gly-176, Lys-208, Ile-210, Glu-215, Gly-241, Ile-242, His-243, Gln-284, and Glu-298. The ATP-grasp 1 domain occupies 133-327; sequence KELMQELGEP…IAKLAAKIAV (195 aa). Residues Gln-284, Glu-298, and Asn-300 each contribute to the Mg(2+) site. Positions 284, 298, and 300 each coordinate Mn(2+). Residues 402 to 546 form an oligomerization domain region; it reads IDQKDLLSKE…YSTYETENES (145 aa). The interval 547–929 is carbamoyl phosphate synthetic domain; sequence RRSAKPSVLV…ALYKAFAGAG (383 aa). Residues 671–861 enclose the ATP-grasp 2 domain; it reads DQVIKDLNLR…MAQLATKVIL (191 aa). Residues Arg-707, Ala-746, Leu-748, Glu-752, Gly-777, Val-778, His-779, Ser-780, Gln-820, and Glu-832 each coordinate ATP. Gln-820, Glu-832, and Asn-834 together coordinate Mg(2+). Positions 820, 832, and 834 each coordinate Mn(2+). An MGS-like domain is found at 930–1059; sequence MEVPDNGAVL…EMTSFKTTEL (130 aa). Residues 930–1059 are allosteric domain; sequence MEVPDNGAVL…EMTSFKTTEL (130 aa).

This sequence belongs to the CarB family. Composed of two chains; the small (or glutamine) chain promotes the hydrolysis of glutamine to ammonia, which is used by the large (or ammonia) chain to synthesize carbamoyl phosphate. Tetramer of heterodimers (alpha,beta)4. Mg(2+) serves as cofactor. Requires Mn(2+) as cofactor.

The catalysed reaction is hydrogencarbonate + L-glutamine + 2 ATP + H2O = carbamoyl phosphate + L-glutamate + 2 ADP + phosphate + 2 H(+). It carries out the reaction hydrogencarbonate + NH4(+) + 2 ATP = carbamoyl phosphate + 2 ADP + phosphate + 2 H(+). The protein operates within amino-acid biosynthesis; L-arginine biosynthesis; carbamoyl phosphate from bicarbonate: step 1/1. Its pathway is pyrimidine metabolism; UMP biosynthesis via de novo pathway; (S)-dihydroorotate from bicarbonate: step 1/3. Its function is as follows. Large subunit of the glutamine-dependent carbamoyl phosphate synthetase (CPSase). CPSase catalyzes the formation of carbamoyl phosphate from the ammonia moiety of glutamine, carbonate, and phosphate donated by ATP, constituting the first step of 2 biosynthetic pathways, one leading to arginine and/or urea and the other to pyrimidine nucleotides. The large subunit (synthetase) binds the substrates ammonia (free or transferred from glutamine from the small subunit), hydrogencarbonate and ATP and carries out an ATP-coupled ligase reaction, activating hydrogencarbonate by forming carboxy phosphate which reacts with ammonia to form carbamoyl phosphate. This chain is Carbamoyl phosphate synthase large chain, found in Limosilactobacillus fermentum (strain NBRC 3956 / LMG 18251) (Lactobacillus fermentum).